The following is a 122-amino-acid chain: Large ribosomal subunit protein uL18 (122 aa).

It belongs to the universal ribosomal protein uL18 family. As to quaternary structure, part of the 50S ribosomal subunit; part of the 5S rRNA/L5/L18/L25 subcomplex. Contacts the 5S and 23S rRNAs.

Functionally, this is one of the proteins that bind and probably mediate the attachment of the 5S RNA into the large ribosomal subunit, where it forms part of the central protuberance. This chain is Large ribosomal subunit protein uL18, found in Thermotoga neapolitana (strain ATCC 49049 / DSM 4359 / NBRC 107923 / NS-E).